The primary structure comprises 1015 residues: PHD finger protein 20-like protein 1 (1015 aa).

A Tudor 1 domain is found at 11 to 71 (ITFEIGARLE…SNRLRPLERP (61 aa)). Residues Lys-75 and Lys-79 each participate in a glycyl lysine isopeptide (Lys-Gly) (interchain with G-Cter in SUMO2) cross-link. The 57-residue stretch at 85–141 (FDFKAGEEVLARWTDCRYYPAKIEAINKEGTFTVQFYDGVIRCLKRMHIKAMPEDAK) folds into the Tudor 2 domain. Disordered regions lie at residues 183–206 (AKNK…RDGG) and 309–367 (EQAI…KAPK). Composition is skewed to polar residues over residues 186–197 (KTGSKPRTSANS) and 315–346 (KPQS…SSGK). Position 368 is a phosphoserine (Ser-368). Disordered stretches follow at residues 389–455 (VINK…SSVP) and 478–513 (CGSE…NPTS). Basic residues predominate over residues 404–415 (PCKHSERRRRSQ). Ser-432 bears the Phosphoserine mark. 2 stretches are compositionally biased toward polar residues: residues 443–453 (SISSQNQQESS) and 480–489 (SEVTGSQAPD). A Glycyl lysine isopeptide (Lys-Gly) (interchain with G-Cter in SUMO2) cross-link involves residue Lys-530. The segment covering 539–565 (EKTSTAFGKRKEKDKERKEKRDKDHYK) has biased composition (basic and acidic residues). Positions 539–585 (EKTSTAFGKRKEKDKERKEKRDKDHYKPKQKKKKKKKKKSKQHDYSD) are disordered. Residues 566–579 (PKQKKKKKKKKKSK) show a composition bias toward basic residues. The segment at 681–729 (IVRCICELDEENGFMIQCEECLCWQHSVCMGLLEDSIPEQYICYICRDP) adopts a PHD-type zinc-finger fold. A Glycyl lysine isopeptide (Lys-Gly) (interchain with G-Cter in SUMO2) cross-link involves residue Lys-849. Positions 859 to 878 (HSYQKPQSFSQDCHSLTDPG) are enriched in polar residues. The disordered stretch occupies residues 859 to 889 (HSYQKPQSFSQDCHSLTDPGSSDDDDVSSFE). The segment covering 879 to 889 (SSDDDDVSSFE) has biased composition (acidic residues). The residue at position 907 (Lys-907) is an N6-acetyllysine.

In terms of assembly, interacts with methylated DNMT1 (DNMT1K142me1). Interacts with SOX2.

The protein resides in the nucleus. Is a negative regulator of proteasomal degradation of a set of methylated proteins, including DNMT1 and SOX2. Involved in the maintainance of embryonic stem cells pluripotency, through the regulation of SOX2 levels. This Rattus norvegicus (Rat) protein is PHD finger protein 20-like protein 1 (Phf20l1).